The following is a 647-amino-acid chain: Threonine--tRNA ligase (647 aa).

In terms of domain architecture, TGS spans 1 to 61; sequence MIKITFPDGA…EEDGSIEIVT (61 aa). The segment at 240 to 538 is catalytic; sequence DHRKLGKELD…LIETYKGAFP (299 aa). Zn(2+)-binding residues include Cys334, His385, and His515.

This sequence belongs to the class-II aminoacyl-tRNA synthetase family. As to quaternary structure, homodimer. Zn(2+) is required as a cofactor.

The protein resides in the cytoplasm. It carries out the reaction tRNA(Thr) + L-threonine + ATP = L-threonyl-tRNA(Thr) + AMP + diphosphate + H(+). Catalyzes the attachment of threonine to tRNA(Thr) in a two-step reaction: L-threonine is first activated by ATP to form Thr-AMP and then transferred to the acceptor end of tRNA(Thr). Also edits incorrectly charged L-seryl-tRNA(Thr). The protein is Threonine--tRNA ligase of Streptococcus pyogenes serotype M4 (strain MGAS10750).